The following is a 147-amino-acid chain: Ubiquitin-conjugating enzyme E2 D3 (147 aa).

The region spanning Met1–Met147 is the UBC core domain. A disulfide bridge links Cys21 with Cys107. The active-site Glycyl thioester intermediate is Cys85.

It belongs to the ubiquitin-conjugating enzyme family. In terms of assembly, interacts with SCF (SKP1-CUL1-F-box protein) E3 ubiquitin ligase complex; when Cullin is neddylated, the interaction between the E2 and the SCF complex is strengthened. Interacts with DAPK3. Interacts with BRCA1; the DNA damage checkpoint promotes the association with BRCA1 after ionizing radiation. Interacts non-covalently with ubiquitin. Interacts with E3 ubiquitin-protein ligase CBLC. Interacts with UBTD1. Interacts with RIGI and RNF135; involved in RIGI ubiquitination and activation. Phosphorylated by AURKB.

It localises to the cell membrane. The protein localises to the endosome membrane. The enzyme catalyses S-ubiquitinyl-[E1 ubiquitin-activating enzyme]-L-cysteine + [E2 ubiquitin-conjugating enzyme]-L-cysteine = [E1 ubiquitin-activating enzyme]-L-cysteine + S-ubiquitinyl-[E2 ubiquitin-conjugating enzyme]-L-cysteine.. It catalyses the reaction S-ubiquitinyl-[E1 ubiquitin-activating enzyme]-L-cysteine + [acceptor protein]-L-lysine = [E1 ubiquitin-activating enzyme]-L-cysteine + N(6)-monoubiquitinyl-[acceptor protein]-L-lysine.. It functions in the pathway protein modification; protein ubiquitination. In terms of biological role, accepts ubiquitin from the E1 complex and catalyzes its covalent attachment to other proteins. In vitro catalyzes 'Lys-11'-, as well as 'Lys-48'-linked polyubiquitination. Cooperates with the E2 CDC34 and the SCF(FBXW11) E3 ligase complex for the polyubiquitination of NFKBIA leading to its subsequent proteasomal degradation. Acts as an initiator E2, priming the phosphorylated NFKBIA target at positions 'Lys-21' and/or 'Lys-22' with a monoubiquitin. Ubiquitin chain elongation is then performed by CDC34, building ubiquitin chains from the UBE2D3-primed NFKBIA-linked ubiquitin. Also acts as an initiator E2, in conjunction with RNF8, for the priming of PCNA. Monoubiquitination of PCNA, and its subsequent polyubiquitination, are essential events in the operation of the DNA damage tolerance (DDT) pathway that is activated after DNA damage caused by UV or chemical agents during S-phase. Associates with the BRCA1/BARD1 E3 ligase complex to perform ubiquitination at DNA damage sites following ionizing radiation leading to DNA repair. Targets DAPK3 for ubiquitination which influences promyelocytic leukemia protein nuclear body (PML-NB) formation in the nucleus. In conjunction with the MDM2 and TOPORS E3 ligases, functions ubiquitination of p53/TP53. In conjunction with the CBL E3 ligase, targets EGFR for polyubiquitination at the plasma membrane as well as during its internalization and transport on endosomes. In conjunction with the STUB1 E3 quality control E3 ligase, ubiquitinates unfolded proteins to catalyze their immediate destruction. Together with RNF135, catalyzes the viral RNA-dependent 'Lys-63'-linked polyubiquitination of RIGI to activate the downstream signaling pathway that leads to interferon beta production. Together with ZNF598, catalyzes ubiquitination of 40S ribosomal proteins in response to ribosome collisions. In cooperation with the GATOR2 complex, catalyzes 'Lys-6'-linked ubiquitination of NPRL2. The sequence is that of Ubiquitin-conjugating enzyme E2 D3 (UBE2D3) from Bos taurus (Bovine).